A 273-amino-acid chain; its full sequence is Nitrogenase iron protein 5 (273 aa).

Gly-8–Ser-15 is an ATP binding site. Cys-94 contributes to the [4Fe-4S] cluster binding site. Arg-97 carries the ADP-ribosylarginine; by dinitrogenase reductase ADP-ribosyltransferase modification. Cys-129 lines the [4Fe-4S] cluster pocket.

It belongs to the NifH/BchL/ChlL family. In terms of assembly, homodimer. It depends on [4Fe-4S] cluster as a cofactor. Post-translationally, the reversible ADP-ribosylation of Arg-97 inactivates the nitrogenase reductase and regulates nitrogenase activity.

It carries out the reaction N2 + 8 reduced [2Fe-2S]-[ferredoxin] + 16 ATP + 16 H2O = H2 + 8 oxidized [2Fe-2S]-[ferredoxin] + 2 NH4(+) + 16 ADP + 16 phosphate + 6 H(+). In terms of biological role, the key enzymatic reactions in nitrogen fixation are catalyzed by the nitrogenase complex, which has 2 components: the iron protein and the molybdenum-iron protein. This is Nitrogenase iron protein 5 (nifH5) from Clostridium pasteurianum.